Here is a 91-residue protein sequence, read N- to C-terminus: DNA-binding protein HU (91 aa).

The protein belongs to the bacterial histone-like protein family.

Its function is as follows. Histone-like DNA-binding protein which is capable of wrapping DNA to stabilize it, and thus to prevent its denaturation under extreme environmental conditions. Also seems to act as a fortuitous virulence factor in delayed sequelae by binding to heparan sulfate-proteoglycans in the extracellular matrix of target organs and acting as a nidus for in situ immune complex formation. The chain is DNA-binding protein HU (hup) from Streptococcus downei (Streptococcus sobrinus).